The following is a 415-amino-acid chain: Serine hydroxymethyltransferase 1 (415 aa).

Residues L117 and 121–123 (GHL) contribute to the (6S)-5,6,7,8-tetrahydrofolate site. The residue at position 225 (K225) is an N6-(pyridoxal phosphate)lysine. 349 to 351 (SPF) is a binding site for (6S)-5,6,7,8-tetrahydrofolate.

This sequence belongs to the SHMT family. In terms of assembly, homodimer. It depends on pyridoxal 5'-phosphate as a cofactor.

Its subcellular location is the cytoplasm. It catalyses the reaction (6R)-5,10-methylene-5,6,7,8-tetrahydrofolate + glycine + H2O = (6S)-5,6,7,8-tetrahydrofolate + L-serine. The protein operates within one-carbon metabolism; tetrahydrofolate interconversion. Its pathway is amino-acid biosynthesis; glycine biosynthesis; glycine from L-serine: step 1/1. Catalyzes the reversible interconversion of serine and glycine with tetrahydrofolate (THF) serving as the one-carbon carrier. This reaction serves as the major source of one-carbon groups required for the biosynthesis of purines, thymidylate, methionine, and other important biomolecules. Also exhibits THF-independent aldolase activity toward beta-hydroxyamino acids, producing glycine and aldehydes, via a retro-aldol mechanism. The sequence is that of Serine hydroxymethyltransferase 1 from Sulfurimonas denitrificans (strain ATCC 33889 / DSM 1251) (Thiomicrospira denitrificans (strain ATCC 33889 / DSM 1251)).